The following is a 273-amino-acid chain: SPRY domain-containing SOCS box protein 1 (273 aa).

Phosphotyrosine is present on Tyr-31. The B30.2/SPRY domain occupies 33 to 231; the sequence is KPTRLDLLLD…IRMRYLNGLD (199 aa). The 42-residue stretch at 232–273 folds into the SOCS box domain; sequence PEPLPLMDLCRRSVRLALGKERLGAIPALPLPASLKAYLLYQ.

Belongs to the SPSB family. As to quaternary structure, component of the probable ECS(SPSB1) E3 ubiquitin-protein ligase complex which contains CUL5, RNF7/RBX2, Elongin BC complex and SPSB1. Interacts with CUL5, RNF7, ELOB and ELOC. Directly interacts with MET tyrosine kinase domain in the presence and in the absence of HGF, however HGF treatment has a positive effect on this interaction. When phosphorylated, interacts with RASA1 without affecting its stability. Interacts (via B30.2/SPRY domain) with PAWR; this interaction is direct and occurs in association with the Elongin BC complex. Interacts with EPHB2. Interacts with NOS2.

It is found in the cytoplasm. The protein resides in the cytosol. The protein operates within protein modification; protein ubiquitination. Substrate recognition component of a SCF-like ECS (Elongin BC-CUL2/5-SOCS-box protein) E3 ubiquitin-protein ligase complex which mediates the ubiquitination and subsequent proteasomal degradation of target proteins. Negatively regulates nitric oxide (NO) production and limits cellular toxicity in activated macrophages by mediating the ubiquitination and proteasomal degradation of NOS2. Acts as a bridge which links the NOS2 with the ECS E3 ubiquitin ligase complex components ELOC and CUL5. This chain is SPRY domain-containing SOCS box protein 1 (Spsb1), found in Mus musculus (Mouse).